We begin with the raw amino-acid sequence, 466 residues long: Soluble pyridine nucleotide transhydrogenase (466 aa).

FAD is bound at residue 36–45 (ERYNNVGGGC).

The protein belongs to the class-I pyridine nucleotide-disulfide oxidoreductase family. Requires FAD as cofactor.

The protein localises to the cytoplasm. It catalyses the reaction NAD(+) + NADPH = NADH + NADP(+). Its function is as follows. Conversion of NADPH, generated by peripheral catabolic pathways, to NADH, which can enter the respiratory chain for energy generation. In Yersinia enterocolitica serotype O:8 / biotype 1B (strain NCTC 13174 / 8081), this protein is Soluble pyridine nucleotide transhydrogenase.